The sequence spans 178 residues: ATP synthase subunit delta (178 aa).

This sequence belongs to the ATPase delta chain family. As to quaternary structure, F-type ATPases have 2 components, F(1) - the catalytic core - and F(0) - the membrane proton channel. F(1) has five subunits: alpha(3), beta(3), gamma(1), delta(1), epsilon(1). F(0) has three main subunits: a(1), b(2) and c(10-14). The alpha and beta chains form an alternating ring which encloses part of the gamma chain. F(1) is attached to F(0) by a central stalk formed by the gamma and epsilon chains, while a peripheral stalk is formed by the delta and b chains.

Its subcellular location is the cell inner membrane. In terms of biological role, f(1)F(0) ATP synthase produces ATP from ADP in the presence of a proton or sodium gradient. F-type ATPases consist of two structural domains, F(1) containing the extramembraneous catalytic core and F(0) containing the membrane proton channel, linked together by a central stalk and a peripheral stalk. During catalysis, ATP synthesis in the catalytic domain of F(1) is coupled via a rotary mechanism of the central stalk subunits to proton translocation. This protein is part of the stalk that links CF(0) to CF(1). It either transmits conformational changes from CF(0) to CF(1) or is implicated in proton conduction. The protein is ATP synthase subunit delta of Pseudomonas putida (strain W619).